The primary structure comprises 68 residues: Small ribosomal subunit protein bS21 (68 aa).

It belongs to the bacterial ribosomal protein bS21 family.

The sequence is that of Small ribosomal subunit protein bS21 from Dinoroseobacter shibae (strain DSM 16493 / NCIMB 14021 / DFL 12).